A 337-amino-acid chain; its full sequence is tRNA N6-adenosine threonylcarbamoyltransferase (337 aa).

Residues His-111 and His-115 each coordinate Fe cation. Residues 134–138, Asp-167, Gly-180, and Asn-272 each bind substrate; that span reads LVSGG. Asp-300 provides a ligand contact to Fe cation.

Belongs to the KAE1 / TsaD family. Requires Fe(2+) as cofactor.

It is found in the cytoplasm. It catalyses the reaction L-threonylcarbamoyladenylate + adenosine(37) in tRNA = N(6)-L-threonylcarbamoyladenosine(37) in tRNA + AMP + H(+). In terms of biological role, required for the formation of a threonylcarbamoyl group on adenosine at position 37 (t(6)A37) in tRNAs that read codons beginning with adenine. Is involved in the transfer of the threonylcarbamoyl moiety of threonylcarbamoyl-AMP (TC-AMP) to the N6 group of A37, together with TsaE and TsaB. TsaD likely plays a direct catalytic role in this reaction. This chain is tRNA N6-adenosine threonylcarbamoyltransferase, found in Escherichia coli (strain SMS-3-5 / SECEC).